We begin with the raw amino-acid sequence, 917 residues long: MSIATPASSDLLRRTFLEFFAQRGHEIVPSAPLVPQNDPTLMFVNAGMVQFKDVFTGKDRRPYQRAASSQKCIRISGKHNDLENVGVTARHQTFFEMLGNFSFGDYFKEDAIAFAWELLTKVYDISPSRLVVTIYNGEGGFPADDEAAAIWRKVTGFGDDRILRLGLADNFWTMGDVGPCGPCSEIHFFHGKEPDVARFGEEPRIDGTGWTEIWNNVFMQYERAEKDGPLVPLPAPSIDTGMGLERLASVLQGVTSNYDTDLLRGLVDKAAELSGKPYSGGSADDDVSMRVIADHARTAAFLIAEGVMPEKQRREYVLRRVMRRAIRHGHRLGIDRPFLHEVALEVVRRMGETYPELRDRRELIARVTEDEEVRFRSTLKRGMKILDERFDEMRSSGERTLPAAAAADLYTTYGFPLDLTQVISAESNFDVDVQGAEAIIKGAGEADGPIDPTAAVDPAHREARAKLAQPVVFTGYEHEEGDSEIVAIVRVEIQGEGDRARKVRALVERAEAGAAVEIVVRETPFYAESGGQVGDVGEVTADGARVEVKDTQKPLAGLVVHEGVVHEGALAVGQRVHLAVDHAARSATRRNHSATHVLHWALRKVLGEHAQQKGSRVGPDVLRFDFTHNRPLTREEISRIEDLVNEKVLTNAKVTTEILAMDEARRRGAMAIFEEKYGDTVRMLTMTPEVVELCGGTHACALGDIGLFKITSEGGVAAGVRRILASTGLNALAYARGVEAELARARQVAKAQGGDLAEKIGKIVAHERELEKKVAELERRILEGAGPAQGGGGGGIDAMLDGARDIGGIKVLARRVPDGTNPGALRDLAEKLRDKLGDRSAVLLGAAVGDKAQLAVMLSKSATERLKAGELIKPIARIVGGSGGGRPDMAQAGGTDVAQLDAAIAALYTEVERALAS.

Zn(2+) is bound by residues His-592, His-596, Cys-694, and His-698.

It belongs to the class-II aminoacyl-tRNA synthetase family. Requires Zn(2+) as cofactor.

It localises to the cytoplasm. It carries out the reaction tRNA(Ala) + L-alanine + ATP = L-alanyl-tRNA(Ala) + AMP + diphosphate. In terms of biological role, catalyzes the attachment of alanine to tRNA(Ala) in a two-step reaction: alanine is first activated by ATP to form Ala-AMP and then transferred to the acceptor end of tRNA(Ala). Also edits incorrectly charged Ser-tRNA(Ala) and Gly-tRNA(Ala) via its editing domain. This Sorangium cellulosum (strain So ce56) (Polyangium cellulosum (strain So ce56)) protein is Alanine--tRNA ligase.